The following is a 1017-amino-acid chain: MDQNGASTEARSKRKQPPTSPSTDRPLKQIKPEVDAHTRNGVPKSPELEVVDDAHSVYSLEEPIAPVAGAVHDTAEWQKTIEGVVKSVVSIHFCQTCSFDTDPAISSEATGFVVDAEKGYILTNRHVVGAGPFIGYCIFDNHEECDVYPVYRDPVHDFGILRFDPKAIKYMSVSALQLRPDFAKVGVEIRVVGNDAGEKLSILSGVISRLDRNAPEYGEGYSDFNTNYIQAAAAASGGSSGSPVVNRDGFAVALQAGGRADGAATDYFLPLDRPLRALELVRRGEAVTRGTVQTQWILKPFDECRRLGLSTDLEKAVRTQFPKETGMLVAEVVLPQGPASTKVEEGDILIKVNGEFITQFVRLDSILDDNVGKTISVTIQRAGENLEVELDVGNLHDITPDRFVSVSGASFHDLSYQQARLYAISLKNAGVFVCEAAGSFRFADGYASGWLIQEVDNQPTPNLDTFIEVMKKIPDRKRIVIQYKHLRDLHTANTSITAVDRHWHAKIRIATRNDKTGLWDFKPIADPVPAVPQVSRRANFVKMSSNYPNAVDIVRSFVRVHVSMPIKLDGFPKMNKQGYGLVVDAEQGLVLVSRAILPYDLCDISLIIADSIFIDAKVVFMHPLQNYVIVKYDPALVNAPVKTPKFATEFIRKGDETIFFGLNQNFRPVVAKTVVTDITTVAIPASAITPRYRATNFDAITVDTNQASHSGSGVLIAEDGTVQALWLSYLGERTSHSGKDVEYHLGLATPNLLPILNEIKSGKTPKLRILNVEFQTVQMSQARVMGVSEDWIEKTEQADPERHQLFMVRKVDSGHGGDGMLEGDILLTLNGKLVTRSPDLDVMYNNEFLEAVIVRKREEKTIKVTTVATEEIETDRMVSFCGATLHRPHQAVRQQISKIHSDVYISSRARGSPAYMYGLAPTNFLTHVNNIPTPDLSTFLREVKKIGDNEYFRLKVMTFDNVPWVATMKKNEHYFPTIEYVKDDTEALGWKRIIHECEDGGAREEMAIDNEAGGDEE.

The disordered stretch occupies residues 1–46 (MDQNGASTEARSKRKQPPTSPSTDRPLKQIKPEVDAHTRNGVPKSP). Basic and acidic residues predominate over residues 25-38 (RPLKQIKPEVDAHT). The interval 88 to 278 (VVSIHFCQTC…LPLDRPLRAL (191 aa)) is serine protease. Catalysis depends on charge relay system residues histidine 126, aspartate 157, and serine 239. PDZ domains are found at residues 305 to 383 (RRLG…QRAG) and 879 to 960 (SFCG…MTFD).

Belongs to the peptidase S1C family.

It localises to the nucleus. Its function is as follows. Nuclear serine protease which mediates apoptosis. The sequence is that of Pro-apoptotic serine protease NMA111 (NMA111) from Phaeosphaeria nodorum (strain SN15 / ATCC MYA-4574 / FGSC 10173) (Glume blotch fungus).